The sequence spans 345 residues: Histidinol-phosphate aminotransferase (345 aa).

K205 is subject to N6-(pyridoxal phosphate)lysine.

The protein belongs to the class-II pyridoxal-phosphate-dependent aminotransferase family. Histidinol-phosphate aminotransferase subfamily. Homodimer. Requires pyridoxal 5'-phosphate as cofactor.

The enzyme catalyses L-histidinol phosphate + 2-oxoglutarate = 3-(imidazol-4-yl)-2-oxopropyl phosphate + L-glutamate. It functions in the pathway amino-acid biosynthesis; L-histidine biosynthesis; L-histidine from 5-phospho-alpha-D-ribose 1-diphosphate: step 7/9. The protein is Histidinol-phosphate aminotransferase of Parabacteroides distasonis (strain ATCC 8503 / DSM 20701 / CIP 104284 / JCM 5825 / NCTC 11152).